Consider the following 411-residue polypeptide: Secretion apparatus protein BsaZ (411 aa).

Helical transmembrane passes span 28–48, 80–100, 137–157, and 175–195; these read IVAL…VDLT, IAAP…LVQS, ALLY…LYHA, and IVLT…VLIL. The disordered stretch occupies residues 341-411; that stretch reads AANRGGPPPE…APARTGDQNA (71 aa). Low complexity predominate over residues 370–404; it reads DACADNAFPDDAPPGAAAPNAGSPDSPAPDGGAPA.

The protein belongs to the type III secretion exporter family.

The protein resides in the cell membrane. In terms of biological role, part of the bsa type III secretion system, is involved in the intracellular replication of invading bacteria inside the host cell. Probably necessary for the lysis of the vacuole membrane and escape into the host cell cytoplasm. In Burkholderia pseudomallei (strain 1106a), this protein is Secretion apparatus protein BsaZ (bsaZ).